The chain runs to 460 residues: Phosphomethylpyrimidine synthase (460 aa).

Substrate-binding positions include Asn-80, Met-109, Tyr-139, His-175, 195-197, 236-239, and Glu-275; these read SRG and DSLR. His-279 contributes to the Zn(2+) binding site. Tyr-302 serves as a coordination point for substrate. Residue His-343 coordinates Zn(2+). Residues Cys-423, Cys-426, and Cys-431 each coordinate [4Fe-4S] cluster.

Belongs to the ThiC family. [4Fe-4S] cluster is required as a cofactor.

It catalyses the reaction 5-amino-1-(5-phospho-beta-D-ribosyl)imidazole + S-adenosyl-L-methionine = 4-amino-2-methyl-5-(phosphooxymethyl)pyrimidine + CO + 5'-deoxyadenosine + formate + L-methionine + 3 H(+). Its pathway is cofactor biosynthesis; thiamine diphosphate biosynthesis. Catalyzes the synthesis of the hydroxymethylpyrimidine phosphate (HMP-P) moiety of thiamine from aminoimidazole ribotide (AIR) in a radical S-adenosyl-L-methionine (SAM)-dependent reaction. This chain is Phosphomethylpyrimidine synthase, found in Rippkaea orientalis (strain PCC 8801 / RF-1) (Cyanothece sp. (strain PCC 8801)).